The following is a 98-amino-acid chain: NADH-ubiquinone oxidoreductase chain 4L (98 aa).

The next 3 helical transmembrane spans lie at 1 to 21 (MSLV…GLLM), 29 to 49 (SLLC…LTIL), and 61 to 81 (IILL…LVMV).

Belongs to the complex I subunit 4L family. Core subunit of respiratory chain NADH dehydrogenase (Complex I) which is composed of 45 different subunits.

Its subcellular location is the mitochondrion inner membrane. The enzyme catalyses a ubiquinone + NADH + 5 H(+)(in) = a ubiquinol + NAD(+) + 4 H(+)(out). Functionally, core subunit of the mitochondrial membrane respiratory chain NADH dehydrogenase (Complex I) which catalyzes electron transfer from NADH through the respiratory chain, using ubiquinone as an electron acceptor. Part of the enzyme membrane arm which is embedded in the lipid bilayer and involved in proton translocation. This Muntiacus feae (Fea's muntjac) protein is NADH-ubiquinone oxidoreductase chain 4L (MT-ND4L).